The chain runs to 115 residues: U3-lycotoxin-Ls1b (115 aa).

A signal peptide spans 1-20; the sequence is MKFVLLFGVLLVTLFSYSSA. Positions 21-44 are excised as a propeptide; that stretch reads EMLDDFDQADEDELLSLIEKEEAR. 4 disulfide bridges follow: Cys-48-Cys-63, Cys-55-Cys-72, Cys-62-Cys-87, and Cys-74-Cys-85.

The protein belongs to the neurotoxin 19 (CSTX) family. 01 subfamily. In terms of tissue distribution, expressed by the venom gland.

The protein localises to the secreted. This Lycosa singoriensis (Wolf spider) protein is U3-lycotoxin-Ls1b.